Reading from the N-terminus, the 411-residue chain is DSEFAELKIRGKIFKLPILKASIGEDVIDISRVSAEADCFTYDPGFMSTASCQSTITYIDGDKGILRHRGYNIKDLAEKSDFLEVAYLLIYGELPTIEQYNNFTTQVAHHSLVNERLHYLFQAFCSSSHPMAIMLAAVGSLSAFYPDLLNFKEADYELTAIRMIAKIPTIAAMSYKYSIGQPFIYPDNSLDFTENFLHMMFATPCTKYKVNPIIKNALNKIFILHADHEQNASTSTVRIAGSSGANAFACISTGIASLWGPAHGGANEAVINMLKEIGSSENIPKFIAKAKDKNDPFRLMGFGHRVYKNYDPRAAVLKETCKAVLKELGQLENNPLLQIAIELEAIALKDEYFIERKLYPNVDFYSGIIYKAMGIPSQMFTVLFAIARTVGWMAQWKEMHEDPEQKISRPR.

Catalysis depends on residues histidine 304 and aspartate 363.

It belongs to the citrate synthase family.

It carries out the reaction oxaloacetate + acetyl-CoA + H2O = citrate + CoA + H(+). It functions in the pathway carbohydrate metabolism; tricarboxylic acid cycle; isocitrate from oxaloacetate: step 1/2. The protein is Citrate synthase (gltA) of Rickettsia australis.